Reading from the N-terminus, the 295-residue chain is Malonyl-[acyl-carrier protein] O-methyltransferase (295 aa).

The protein belongs to the methyltransferase superfamily.

It carries out the reaction malonyl-[ACP] + S-adenosyl-L-methionine = malonyl-[ACP] methyl ester + S-adenosyl-L-homocysteine. Its pathway is cofactor biosynthesis; biotin biosynthesis. Converts the free carboxyl group of a malonyl-thioester to its methyl ester by transfer of a methyl group from S-adenosyl-L-methionine (SAM). It allows to synthesize pimeloyl-ACP via the fatty acid synthetic pathway. The chain is Malonyl-[acyl-carrier protein] O-methyltransferase from Halorhodospira halophila (strain DSM 244 / SL1) (Ectothiorhodospira halophila (strain DSM 244 / SL1)).